Reading from the N-terminus, the 379-residue chain is Centrosomal protein 43 (379 aa).

A LisH domain is found at D70–Q102. The segment at E139–S196 is disordered. T143 carries the phosphothreonine modification. Residues S152 and S160 each carry the phosphoserine modification. Residues G163–T184 show a composition bias toward polar residues. The residue at position 170 (T170) is a Phosphothreonine. Residue S182 is modified to Phosphoserine. Over residues S185–S196 the composition is skewed to low complexity. Position 214 is a phosphothreonine (T214). The interval D216–K288 is disordered. The span at P225 to F236 shows a compositional bias: acidic residues. Residues P239 to K255 show a composition bias toward basic and acidic residues. Over residues A266–L282 the composition is skewed to low complexity. 2 positions are modified to phosphoserine: S281 and S306. Y317 carries the phosphotyrosine modification.

This sequence belongs to the CEP43 family. In terms of assembly, homodimer. Part of a ternary complex that contains CEP350, CEP43 and MAPRE1. Interacts directly with CEP350 and MAPRE1. Interacts with CEP19. Interacts (via N-terminus) with CEP350 (via C-terminus).

It is found in the cytoplasm. The protein localises to the cytoskeleton. The protein resides in the microtubule organizing center. It localises to the centrosome. Its subcellular location is the centriole. It is found in the cilium basal body. Its function is as follows. Required for anchoring microtubules to the centrosomes. Required for ciliation. This is Centrosomal protein 43 (CEP43) from Macaca fascicularis (Crab-eating macaque).